The following is a 449-amino-acid chain: Glucose-6-phosphate isomerase (449 aa).

Glu291 acts as the Proton donor in catalysis. Residues His312 and Lys426 contribute to the active site.

The protein belongs to the GPI family.

It localises to the cytoplasm. It catalyses the reaction alpha-D-glucose 6-phosphate = beta-D-fructose 6-phosphate. It functions in the pathway carbohydrate biosynthesis; gluconeogenesis. It participates in carbohydrate degradation; glycolysis; D-glyceraldehyde 3-phosphate and glycerone phosphate from D-glucose: step 2/4. Its function is as follows. Catalyzes the reversible isomerization of glucose-6-phosphate to fructose-6-phosphate. In Streptococcus pyogenes serotype M2 (strain MGAS10270), this protein is Glucose-6-phosphate isomerase.